A 157-amino-acid polypeptide reads, in one-letter code: MAKKQQTKTYTQAIQNRKARFEFEILDTVVAGIELLGSEVKSVRLGKASLNESFAIIHHGEVWLENMQITPYEFNHLDSLEPKRSRKLLLHKAEIAKLQSQISEKGLALIPLKAFFNPKGVLKLELAVAKGKKLFDKRETIKNRDNERQLQQIKKQY.

This sequence belongs to the SmpB family.

The protein resides in the cytoplasm. Its function is as follows. Required for rescue of stalled ribosomes mediated by trans-translation. Binds to transfer-messenger RNA (tmRNA), required for stable association of tmRNA with ribosomes. tmRNA and SmpB together mimic tRNA shape, replacing the anticodon stem-loop with SmpB. tmRNA is encoded by the ssrA gene; the 2 termini fold to resemble tRNA(Ala) and it encodes a 'tag peptide', a short internal open reading frame. During trans-translation Ala-aminoacylated tmRNA acts like a tRNA, entering the A-site of stalled ribosomes, displacing the stalled mRNA. The ribosome then switches to translate the ORF on the tmRNA; the nascent peptide is terminated with the 'tag peptide' encoded by the tmRNA and targeted for degradation. The ribosome is freed to recommence translation, which seems to be the essential function of trans-translation. The chain is SsrA-binding protein from Chlorobium phaeovibrioides (strain DSM 265 / 1930) (Prosthecochloris vibrioformis (strain DSM 265)).